Consider the following 217-residue polypeptide: MKYNKLVDHTLLAPQATVHDIDKLIDEAIKYDFKSVCIAPTWIKHAKEKLAKSDVLVCTVIGFPLGSNATSVKVYETKIAIAHGADEIDMVINIGRFKNKEYEFVLNEIKAIKEECGSKTLKVIVETALLTNEEIAKVTEIVMQSGAEFIKTSTGFSYRGASFEDVEIMKRVAQDKLLIKASGGIKVGDDAIKMVELGANRLGMSKSIQIMEDLEKK.

The active-site Proton donor/acceptor is Asp-89. The Schiff-base intermediate with acetaldehyde role is filled by Lys-151. The active-site Proton donor/acceptor is Lys-180.

Belongs to the DeoC/FbaB aldolase family. DeoC type 1 subfamily.

Its subcellular location is the cytoplasm. The enzyme catalyses 2-deoxy-D-ribose 5-phosphate = D-glyceraldehyde 3-phosphate + acetaldehyde. Its pathway is carbohydrate degradation; 2-deoxy-D-ribose 1-phosphate degradation; D-glyceraldehyde 3-phosphate and acetaldehyde from 2-deoxy-alpha-D-ribose 1-phosphate: step 2/2. Its function is as follows. Catalyzes a reversible aldol reaction between acetaldehyde and D-glyceraldehyde 3-phosphate to generate 2-deoxy-D-ribose 5-phosphate. This Metamycoplasma arthritidis (strain 158L3-1) (Mycoplasma arthritidis) protein is Deoxyribose-phosphate aldolase.